A 165-amino-acid polypeptide reads, in one-letter code: Crossover junction endodeoxyribonuclease RuvC (165 aa).

Catalysis depends on residues Asp-8, Glu-69, and His-141. Mg(2+) is bound by residues Asp-8, Glu-69, and His-141.

The protein belongs to the RuvC family. In terms of assembly, homodimer which binds Holliday junction (HJ) DNA. The HJ becomes 2-fold symmetrical on binding to RuvC with unstacked arms; it has a different conformation from HJ DNA in complex with RuvA. In the full resolvosome a probable DNA-RuvA(4)-RuvB(12)-RuvC(2) complex forms which resolves the HJ. It depends on Mg(2+) as a cofactor.

The protein resides in the cytoplasm. It catalyses the reaction Endonucleolytic cleavage at a junction such as a reciprocal single-stranded crossover between two homologous DNA duplexes (Holliday junction).. Its function is as follows. The RuvA-RuvB-RuvC complex processes Holliday junction (HJ) DNA during genetic recombination and DNA repair. Endonuclease that resolves HJ intermediates. Cleaves cruciform DNA by making single-stranded nicks across the HJ at symmetrical positions within the homologous arms, yielding a 5'-phosphate and a 3'-hydroxyl group; requires a central core of homology in the junction. The consensus cleavage sequence is 5'-(A/T)TT(C/G)-3'. Cleavage occurs on the 3'-side of the TT dinucleotide at the point of strand exchange. HJ branch migration catalyzed by RuvA-RuvB allows RuvC to scan DNA until it finds its consensus sequence, where it cleaves and resolves the cruciform DNA. In Wolbachia pipientis subsp. Culex pipiens (strain wPip), this protein is Crossover junction endodeoxyribonuclease RuvC.